Reading from the N-terminus, the 142-residue chain is Large ribosomal subunit protein uL13 (142 aa).

Belongs to the universal ribosomal protein uL13 family. As to quaternary structure, part of the 50S ribosomal subunit.

This protein is one of the early assembly proteins of the 50S ribosomal subunit, although it is not seen to bind rRNA by itself. It is important during the early stages of 50S assembly. In Treponema pallidum (strain Nichols), this protein is Large ribosomal subunit protein uL13.